Consider the following 187-residue polypeptide: UPF0232 protein JTY_0004 (187 aa).

Composition is skewed to basic and acidic residues over residues 1–17 and 24–45; these read MTGS…ERSM and LVRR…DAGR. Disordered regions lie at residues 1 to 75 and 168 to 187; these read MTGS…DPQP and PSWR…DTYG.

This sequence belongs to the UPF0232 family.

In Mycobacterium bovis (strain BCG / Tokyo 172 / ATCC 35737 / TMC 1019), this protein is UPF0232 protein JTY_0004.